The sequence spans 557 residues: Formate--tetrahydrofolate ligase (557 aa).

An ATP-binding site is contributed by 66–73 (TPAGEGKS).

This sequence belongs to the formate--tetrahydrofolate ligase family.

The enzyme catalyses (6S)-5,6,7,8-tetrahydrofolate + formate + ATP = (6R)-10-formyltetrahydrofolate + ADP + phosphate. Its pathway is one-carbon metabolism; tetrahydrofolate interconversion. The protein is Formate--tetrahydrofolate ligase of Clostridium botulinum (strain 657 / Type Ba4).